Reading from the N-terminus, the 402-residue chain is MAKRSLASLNAGDLSGKRVLVRVDFNVPLNDAGAITDDTRIRAALPTINDLIGKGAKVILSAHFGRPKGQVNDAMRLTPVAARLSELLGKPVAKTDSCIGPDAEAKVGAMADGDVVLLENVRFFAEEEKNEAGFAEKLAGLAEVYVNDAFGAAHRAHASTEGVTKFLKPAVAGFLMEKELQYLQGAVDEPKRPLAAIVGGSKVSSKIGVLEALIDKCDKVLIGGGMIFTFYKARGLSVGKSLVEEDKLELAKELEAKAKAKGVELLLPTDVVLADNFAPDANSQVADVTAIPDGWMGLDIGPDAVKVFQAALADCQTVIWNGPMGVFEFEKFATGTNAIATTLAELSAKGCCTIIGGGDSVAAVEKAGLAEKMSHISTGGGASLELLEGKVLPGVAALNDAA.

Substrate contacts are provided by residues 24–26 (DFN), arginine 40, 63–66 (HFGR), arginine 122, and arginine 155. Residues lysine 206, glycine 297, glutamate 328, and 357–360 (GGDS) each bind ATP.

This sequence belongs to the phosphoglycerate kinase family. In terms of assembly, monomer.

It is found in the cytoplasm. The enzyme catalyses (2R)-3-phosphoglycerate + ATP = (2R)-3-phospho-glyceroyl phosphate + ADP. Its pathway is carbohydrate degradation; glycolysis; pyruvate from D-glyceraldehyde 3-phosphate: step 2/5. The sequence is that of Phosphoglycerate kinase from Synechococcus sp. (strain WH7803).